The following is a 914-amino-acid chain: Alanine--tRNA ligase (914 aa).

The Zn(2+) site is built by histidine 613, histidine 617, cysteine 717, and histidine 721.

It belongs to the class-II aminoacyl-tRNA synthetase family. Zn(2+) is required as a cofactor.

Its subcellular location is the cytoplasm. The enzyme catalyses tRNA(Ala) + L-alanine + ATP = L-alanyl-tRNA(Ala) + AMP + diphosphate. Its function is as follows. Catalyzes the attachment of alanine to tRNA(Ala) in a two-step reaction: alanine is first activated by ATP to form Ala-AMP and then transferred to the acceptor end of tRNA(Ala). Also edits incorrectly charged Ser-tRNA(Ala) and Gly-tRNA(Ala) via its editing domain. This Pyrococcus abyssi (strain GE5 / Orsay) protein is Alanine--tRNA ligase.